Here is a 494-residue protein sequence, read N- to C-terminus: Solute carrier family 2, facilitated glucose transporter member 3 (494 aa).

The Cytoplasmic segment spans residues 1 to 10 (MGTTKVTAPL). Residues 11-32 (IFAISVATIGSFQFGYNTGVIN) traverse the membrane as a helical segment. The Extracellular portion of the chain corresponds to 33 to 64 (APEAIIKDFLNYTLEERSEPPPSSVLLTSLWS). Residue Asn43 is glycosylated (N-linked (GlcNAc...) asparagine). The helical transmembrane segment at 65–85 (LSVAIFSVGGMIGSFSVGLFV) threads the bilayer. Residues 86 to 90 (NRFGR) lie on the Cytoplasmic side of the membrane. The chain crosses the membrane as a helical span at residues 91-111 (GNSMLIVNLLAIAGGCLMGFC). Topologically, residues 112–118 (KIAESVE) are extracellular. The helical transmembrane segment at 119–142 (MLILGRLIIGLFCGLCTGFVPMYI) threads the bilayer. Over 143–153 (GEISPTALRGA) the chain is Cytoplasmic. The helical transmembrane segment at 154–174 (FGTLNQLGIVIGILVAQIFGL) threads the bilayer. Gln159 provides a ligand contact to D-glucose. At 175 to 183 (KVILGTEDL) the chain is on the extracellular side. Residues 184-204 (WPLLLGFTILPAIIQCAALPF) form a helical membrane-spanning segment. Residues 205–269 (CPESPRFLLI…LFRAPNYRQP (65 aa)) lie on the Cytoplasmic side of the membrane. Thr232 bears the Phosphothreonine mark. Residues 270–290 (IIISIMLQLSQQLSGINAVFY) form a helical membrane-spanning segment. Residues 277–279 (QLS) form an important for selectivity against fructose region. D-glucose is bound by residues 280-281 (QQ) and Asn286. The Extracellular segment spans residues 291–304 (YSTGIFKDAGVQEP). A helical transmembrane segment spans residues 305–325 (VYATIGAGVVNTIFTVVSVFL). A D-glucose-binding site is contributed by Asn315. The Cytoplasmic segment spans residues 326 to 331 (VERAGR). A helical transmembrane segment spans residues 332-352 (RTLHLIGLGGMAFCSILMTIS). Over 353–363 (LLLKDNYSWMS) the chain is Extracellular. Asn358 carries N-linked (GlcNAc...) asparagine glycosylation. Residues 364 to 389 (FICIGAILVFVAFFEIGPGPIPWFIV) form a helical membrane-spanning segment. The D-glucose site is built by Glu378 and Trp386. Topologically, residues 390 to 399 (AELFGQGPRP) are cytoplasmic. Residues 400–420 (AAMAVAGCSNWTSNFLVGLLF) form a helical membrane-spanning segment. Topologically, residues 421 to 429 (PSAAFYLGA) are extracellular. Residues 430 to 450 (YVFIVFTVFLVIFWVFTFFKV) traverse the membrane as a helical segment. Over 451 to 494 (PETRGRTFEEITRAFEGQTQTGTRGEKGPIMEMNSIQPTKDTNA) the chain is Cytoplasmic. The disordered stretch occupies residues 469-494 (TQTGTRGEKGPIMEMNSIQPTKDTNA). The segment covering 484-494 (NSIQPTKDTNA) has biased composition (polar residues). A Phosphoserine modification is found at Ser485. Phosphothreonine is present on Thr492.

Belongs to the major facilitator superfamily. Sugar transporter (TC 2.A.1.1) family. Glucose transporter subfamily. In terms of assembly, interacts with SMIM43; the interaction may promote SLC2A1-mediated glucose transport to meet the energy needs of mesendoderm differentiation.

It is found in the cell membrane. It localises to the perikaryon. The protein resides in the cell projection. The enzyme catalyses D-glucose(out) = D-glucose(in). It catalyses the reaction D-galactose(in) = D-galactose(out). With respect to regulation, deoxyglucose transport is inhibited by D-glucose, D-galactose and maltose. Galactose transport is inhibited by D-glucose and maltose. Functionally, facilitative glucose transporter. Can also mediate the uptake of various other monosaccharides across the cell membrane. Mediates the uptake of glucose, 2-deoxyglucose, galactose, mannose, xylose and fucose, and probably also dehydroascorbate. Does not mediate fructose transport. Required for mesendoderm differentiation. This chain is Solute carrier family 2, facilitated glucose transporter member 3, found in Bos taurus (Bovine).